A 284-amino-acid polypeptide reads, in one-letter code: Interferon antagonist OPG040 (284 aa).

6 ANK repeats span residues 29 to 58 (HGHS…LKNL), 60 to 89 (ENEF…DDSQ), 93 to 122 (KGNT…RLMF), 127 to 157 (GWKT…TFDL), 159 to 188 (ILLS…STNT), and 193 to 222 (LFIP…NIYS).

Belongs to the orthopoxvirus OPG039 family.

The protein localises to the host cytoplasm. Its subcellular location is the host nucleus. In terms of biological role, inhibits antiviral activity induced by type I interferons. Does not block signal transduction of IFN, but is important to counter the host antiviral state induced by a pre-treatment with IFN. Plays a role in the inhibition of host NF-kappa-B activation by preventing the acetylation of the RELA/p65 subunit of NF-kappaB. This chain is Interferon antagonist OPG040 (OPG039), found in Bos taurus (Bovine).